The sequence spans 329 residues: GTPase Obg (329 aa).

Residues 1 to 159 form the Obg domain; it reads MQFIDQACIS…WLLHLELKLL (159 aa). One can recognise an OBG-type G domain in the interval 160 to 328; it reads AEVGIIGLPN…LLKNVWEKLE (169 aa). ATP is bound by residues 166–173, 191–195, 213–216, 280–283, and 309–311; these read GLPNAGKS, FTTLI, DIPG, NKKE, and SAA. Mg(2+) contacts are provided by S173 and T193.

The protein belongs to the TRAFAC class OBG-HflX-like GTPase superfamily. OBG GTPase family. Monomer. Mg(2+) serves as cofactor.

Its subcellular location is the cytoplasm. Functionally, an essential GTPase which binds GTP, GDP and possibly (p)ppGpp with moderate affinity, with high nucleotide exchange rates and a fairly low GTP hydrolysis rate. Plays a role in control of the cell cycle, stress response, ribosome biogenesis and in those bacteria that undergo differentiation, in morphogenesis control. The protein is GTPase Obg of Prochlorococcus marinus (strain MIT 9211).